Here is a 210-residue protein sequence, read N- to C-terminus: Orotate phosphoribosyltransferase (210 aa).

Residues arginine 94, lysine 98, histidine 100, and 120 to 128 (EDLISTGGS) contribute to the 5-phospho-alpha-D-ribose 1-diphosphate site. Serine 124 is a binding site for orotate.

The protein belongs to the purine/pyrimidine phosphoribosyltransferase family. PyrE subfamily. Homodimer. It depends on Mg(2+) as a cofactor.

It carries out the reaction orotidine 5'-phosphate + diphosphate = orotate + 5-phospho-alpha-D-ribose 1-diphosphate. Its pathway is pyrimidine metabolism; UMP biosynthesis via de novo pathway; UMP from orotate: step 1/2. Catalyzes the transfer of a ribosyl phosphate group from 5-phosphoribose 1-diphosphate to orotate, leading to the formation of orotidine monophosphate (OMP). The sequence is that of Orotate phosphoribosyltransferase from Bacillus cereus (strain B4264).